The chain runs to 153 residues: UPF0266 membrane protein YE1773 (153 aa).

3 helical membrane-spanning segments follow: residues 6–26 (IVLIVFIALLLAYAIYDEFIM), 45–65 (IDCAIFVGLIAILVYNNVMAN), and 67–87 (EPLTTYLLVGLALIAFYLSYI).

The protein belongs to the UPF0266 family.

It localises to the cell inner membrane. This chain is UPF0266 membrane protein YE1773, found in Yersinia enterocolitica serotype O:8 / biotype 1B (strain NCTC 13174 / 8081).